Reading from the N-terminus, the 473-residue chain is ATP synthase subunit beta (473 aa).

Residue 158-165 (GGAGVGKT) coordinates ATP.

This sequence belongs to the ATPase alpha/beta chains family. In terms of assembly, F-type ATPases have 2 components, CF(1) - the catalytic core - and CF(0) - the membrane proton channel. CF(1) has five subunits: alpha(3), beta(3), gamma(1), delta(1), epsilon(1). CF(0) has three main subunits: a(1), b(2) and c(9-12). The alpha and beta chains form an alternating ring which encloses part of the gamma chain. CF(1) is attached to CF(0) by a central stalk formed by the gamma and epsilon chains, while a peripheral stalk is formed by the delta and b chains. The F(1)F(0) complex interacts with SpoIIIJ and YqjG; YqgA is found in the same complex.

It is found in the cell membrane. Its subcellular location is the membrane raft. It catalyses the reaction ATP + H2O + 4 H(+)(in) = ADP + phosphate + 5 H(+)(out). Functionally, produces ATP from ADP in the presence of a proton gradient across the membrane. The catalytic sites are hosted primarily by the beta subunits. In Bacillus subtilis (strain 168), this protein is ATP synthase subunit beta.